The chain runs to 119 residues: uncharacterized protein (119 aa).

The 112-residue stretch at 1–112 (MVFNMRSTRG…FISSCLLLVL (112 aa)) folds into the ABC transmembrane type-1 domain. Helical transmembrane passes span 51 to 73 (VLAW…ATRF) and 91 to 111 (FEIA…LLLV).

The protein belongs to the binding-protein-dependent transport system permease family. CysTW subfamily.

Its subcellular location is the cell membrane. This is an uncharacterized protein from Haemophilus influenzae (strain ATCC 51907 / DSM 11121 / KW20 / Rd).